The following is a 1357-amino-acid chain: DNA-directed RNA polymerase subunit beta (1357 aa).

The protein belongs to the RNA polymerase beta chain family. The RNAP catalytic core consists of 2 alpha, 1 beta, 1 beta' and 1 omega subunit. When a sigma factor is associated with the core the holoenzyme is formed, which can initiate transcription.

It carries out the reaction RNA(n) + a ribonucleoside 5'-triphosphate = RNA(n+1) + diphosphate. Functionally, DNA-dependent RNA polymerase catalyzes the transcription of DNA into RNA using the four ribonucleoside triphosphates as substrates. This is DNA-directed RNA polymerase subunit beta from Pseudomonas syringae pv. syringae (strain B728a).